The sequence spans 153 residues: NADPH-dependent 7-cyano-7-deazaguanine reductase (153 aa).

Polar residues predominate over residues Met1–Pro17. Residues Met1–Ala23 are disordered. Residue Cys51 is the Thioimide intermediate of the active site. Asp58 serves as the catalytic Proton donor. Substrate contacts are provided by residues Val73–Ser75 and His92–Glu93.

The protein belongs to the GTP cyclohydrolase I family. QueF type 1 subfamily.

It is found in the cytoplasm. It carries out the reaction 7-aminomethyl-7-carbaguanine + 2 NADP(+) = 7-cyano-7-deazaguanine + 2 NADPH + 3 H(+). The protein operates within tRNA modification; tRNA-queuosine biosynthesis. Its function is as follows. Catalyzes the NADPH-dependent reduction of 7-cyano-7-deazaguanine (preQ0) to 7-aminomethyl-7-deazaguanine (preQ1). This Chelativorans sp. (strain BNC1) protein is NADPH-dependent 7-cyano-7-deazaguanine reductase.